A 271-amino-acid polypeptide reads, in one-letter code: GATA transcription factor 19 (271 aa).

A disordered region spans residues 1–23 (MAAEPPADGRDPPADDGAAGDGA). Positions 33-68 (LSAASEQLTLVYQGEVYVFDPVPPQKVQAVLLVLGG) constitute a Tify domain. A CCT domain is found at 95–137 (RVASLMRFREKRKERCFDKKIRYSVRKEVAQKMKRRKGQFAGR). The GATA-type zinc-finger motif lies at 166 to 193 (CQNCGISSRLTPAMRRGPAGPRSLCNAC). Residues 238–271 (NQTTMKTDTEMVPEQEQKADVLPPTKEEDSMATS) are disordered. Residues 252 to 271 (QEQKADVLPPTKEEDSMATS) show a composition bias toward basic and acidic residues.

Belongs to the type IV zinc-finger family. Class C subfamily.

The protein localises to the nucleus. Transcriptional activator that specifically binds 5'-GATA-3' or 5'-GAT-3' motifs within gene promoters. This Oryza sativa subsp. japonica (Rice) protein is GATA transcription factor 19.